Consider the following 369-residue polypeptide: Methylthioribose-1-phosphate isomerase (369 aa).

Position 1 is an N-acetylmethionine (methionine 1). Arginine 158 is subject to Omega-N-methylarginine. Aspartate 248 serves as the catalytic Proton donor. The residue at position 366 (serine 366) is a Phosphoserine.

The protein belongs to the eIF-2B alpha/beta/delta subunits family. MtnA subfamily.

It is found in the cytoplasm. The protein resides in the nucleus. The enzyme catalyses 5-(methylsulfanyl)-alpha-D-ribose 1-phosphate = 5-(methylsulfanyl)-D-ribulose 1-phosphate. The protein operates within amino-acid biosynthesis; L-methionine biosynthesis via salvage pathway; L-methionine from S-methyl-5-thio-alpha-D-ribose 1-phosphate: step 1/6. Functionally, catalyzes the interconversion of methylthioribose-1-phosphate (MTR-1-P) into methylthioribulose-1-phosphate (MTRu-1-P). This Mus musculus (Mouse) protein is Methylthioribose-1-phosphate isomerase (Mri1).